The following is a 391-amino-acid chain: DNA polymerase IV (391 aa).

Positions 6–187 (IIHVDMDAFF…LPVEMLWGVG (182 aa)) constitute a UmuC domain. Mg(2+)-binding residues include Asp10 and Asp105. The active site involves Glu106.

The protein belongs to the DNA polymerase type-Y family. As to quaternary structure, monomer. It depends on Mg(2+) as a cofactor.

The protein localises to the cytoplasm. It catalyses the reaction DNA(n) + a 2'-deoxyribonucleoside 5'-triphosphate = DNA(n+1) + diphosphate. In terms of biological role, poorly processive, error-prone DNA polymerase involved in untargeted mutagenesis. Copies undamaged DNA at stalled replication forks, which arise in vivo from mismatched or misaligned primer ends. These misaligned primers can be extended by PolIV. Exhibits no 3'-5' exonuclease (proofreading) activity. May be involved in translesional synthesis, in conjunction with the beta clamp from PolIII. The protein is DNA polymerase IV of Carboxydothermus hydrogenoformans (strain ATCC BAA-161 / DSM 6008 / Z-2901).